The sequence spans 132 residues: MKEKLALALLSFFLGLGSFFSFYVAPTLFKVLERQQAGAVVEKVFPVYFGLGIILVGISLFLGRDSGKLFLSLGILNLLLLLLQEFIVIPKLHGLKATNYELFLKYHGVSMGINLAILLLTLGKVLILIFKR.

The next 4 membrane-spanning stretches (helical) occupy residues 7 to 29 (LALLSFFLGLGSFFSFYVAPTLF), 44 to 62 (VFPVYFGLGIILVGISLFL), 69 to 88 (LFLSLGILNLLLLLLQEFIV), and 108 to 130 (GVSMGINLAILLLTLGKVLILIF).

The protein localises to the cell membrane. This is an uncharacterized protein from Aquifex aeolicus (strain VF5).